Reading from the N-terminus, the 326-residue chain is MSNISVIGTGSYVPNNIITNDFLSTIVDTSDEWIRTRTGILERRISKGENTIYMATESAKEAIKNANIEANDLDLIIVATLTPDNFMPSTACSVQKEIGAINALCFDISAACSGFIYGLEIACSMLKNSFRNKALIIGAENLSKIVDWEDRNTCVLFGDGAGAAILSKTKEEGILEFHSGSNGLKGEHLTCGVLKANNTPNKNDRLEKNNFIKMNGKEIFRFAVGAMNETICNIQEKTKWDLNEVKYIISHQANSRIIEYTAKKLNTEKDKFYMNLDKYGNTSAASIPIALDEMNKRGLLNKQDKIILVGFGGGLTFGGVAIVWSI.

Catalysis depends on residues C112 and H251. The tract at residues 252–256 is ACP-binding; it reads QANSR. N281 is an active-site residue.

This sequence belongs to the thiolase-like superfamily. FabH family. As to quaternary structure, homodimer.

The protein resides in the cytoplasm. It catalyses the reaction malonyl-[ACP] + acetyl-CoA + H(+) = 3-oxobutanoyl-[ACP] + CO2 + CoA. The protein operates within lipid metabolism; fatty acid biosynthesis. In terms of biological role, catalyzes the condensation reaction of fatty acid synthesis by the addition to an acyl acceptor of two carbons from malonyl-ACP. Catalyzes the first condensation reaction which initiates fatty acid synthesis and may therefore play a role in governing the total rate of fatty acid production. Possesses both acetoacetyl-ACP synthase and acetyl transacylase activities. Its substrate specificity determines the biosynthesis of branched-chain and/or straight-chain of fatty acids. The protein is Beta-ketoacyl-[acyl-carrier-protein] synthase III of Clostridium botulinum (strain Langeland / NCTC 10281 / Type F).